The sequence spans 416 residues: 3-oxoacyl-[acyl-carrier-protein] synthase 1 (416 aa).

The Ketosynthase family 3 (KS3) domain occupies 11-415; sequence FPSVVVTAVT…GHNVALAFGR (405 aa). Catalysis depends on for beta-ketoacyl synthase activity residues Cys171, His311, and His345. His311 and His345 together coordinate substrate.

Belongs to the thiolase-like superfamily. Beta-ketoacyl-ACP synthases family.

Its subcellular location is the cytoplasm. It carries out the reaction an ultra-long-chain mono-unsaturated fatty acyl-[ACP] + malonyl-[ACP] + H(+) = a 3-oxo-ultra-long-chain mono-unsaturated fatty acyl-[ACP] + holo-[ACP] + CO2. Its pathway is lipid metabolism; mycolic acid biosynthesis. Part of the mycobacterial fatty acid elongation system FAS-II, which is involved in mycolic acid biosynthesis. Catalyzes the elongation of long chain acyl-ACP substrates by the addition of two carbons from malonyl-ACP to an acyl acceptor. Involved in the initial extension of the mycolate chain and forms monounsaturated fatty acids that averaged 40 carbons in length. The sequence is that of 3-oxoacyl-[acyl-carrier-protein] synthase 1 (kasA) from Mycobacterium leprae (strain TN).